Consider the following 693-residue polypeptide: UvrABC system protein C (693 aa).

One can recognise a GIY-YIG domain in the interval 16 to 95 (DAPGVYRFRD…IKEFDPRFNV (80 aa)). A UVR domain is found at 208-243 (GVFLRRLESEMAAASAELDFERAARVRDDINALRRV). The tract at residues 656 to 693 (APSPDDATTEPGAVGEPGTADGAAADPDGRDAVVVPEG) is disordered. Low complexity predominate over residues 672–693 (PGTADGAAADPDGRDAVVVPEG).

Belongs to the UvrC family. In terms of assembly, interacts with UvrB in an incision complex.

It localises to the cytoplasm. Its function is as follows. The UvrABC repair system catalyzes the recognition and processing of DNA lesions. UvrC both incises the 5' and 3' sides of the lesion. The N-terminal half is responsible for the 3' incision and the C-terminal half is responsible for the 5' incision. The sequence is that of UvrABC system protein C from Beutenbergia cavernae (strain ATCC BAA-8 / DSM 12333 / CCUG 43141 / JCM 11478 / NBRC 16432 / NCIMB 13614 / HKI 0122).